Reading from the N-terminus, the 191-residue chain is Protein UL140 (191 aa).

A helical membrane pass occupies residues 28 to 48; that stretch reads TLVVFGFIVTLLFFLFMLYFW.

The protein resides in the host membrane. The protein is Protein UL140 (UL140) of Homo sapiens (Human).